The chain runs to 198 residues: Transcriptional regulator GfcR (198 aa).

It belongs to the purine/pyrimidine phosphoribosyltransferase family. GfcR subfamily.

In Thermoplasma acidophilum (strain ATCC 25905 / DSM 1728 / JCM 9062 / NBRC 15155 / AMRC-C165), this protein is Transcriptional regulator GfcR.